Here is a 365-residue protein sequence, read N- to C-terminus: Aminomethyltransferase (365 aa).

This sequence belongs to the GcvT family. The glycine cleavage system is composed of four proteins: P, T, L and H.

It carries out the reaction N(6)-[(R)-S(8)-aminomethyldihydrolipoyl]-L-lysyl-[protein] + (6S)-5,6,7,8-tetrahydrofolate = N(6)-[(R)-dihydrolipoyl]-L-lysyl-[protein] + (6R)-5,10-methylene-5,6,7,8-tetrahydrofolate + NH4(+). The glycine cleavage system catalyzes the degradation of glycine. The sequence is that of Aminomethyltransferase from Serratia proteamaculans (strain 568).